The sequence spans 399 residues: Proteasome-activating nucleotidase (399 aa).

A coiled-coil region spans residues Ile19–Pro60. Residues Gly184–Leu189 and His323 each bind ATP. The segment at Ile397–Gly399 is docks into pockets in the proteasome alpha-ring to cause gate opening.

Belongs to the AAA ATPase family. Homohexamer. The hexameric complex has a two-ring architecture resembling a top hat that caps the 20S proteasome core at one or both ends. Upon ATP-binding, the C-terminus of PAN interacts with the alpha-rings of the proteasome core by binding to the intersubunit pockets.

It is found in the cytoplasm. Functionally, ATPase which is responsible for recognizing, binding, unfolding and translocation of substrate proteins into the archaeal 20S proteasome core particle. Is essential for opening the gate of the 20S proteasome via an interaction with its C-terminus, thereby allowing substrate entry and access to the site of proteolysis. Thus, the C-termini of the proteasomal ATPase function like a 'key in a lock' to induce gate opening and therefore regulate proteolysis. Unfolding activity requires energy from ATP hydrolysis, whereas ATP binding alone promotes ATPase-20S proteasome association which triggers gate opening, and supports translocation of unfolded substrates. In Pyrococcus horikoshii (strain ATCC 700860 / DSM 12428 / JCM 9974 / NBRC 100139 / OT-3), this protein is Proteasome-activating nucleotidase.